The sequence spans 715 residues: Fatty acid oxidation complex subunit alpha (715 aa).

The interval 1 to 190 is enoyl-CoA hydratase; the sequence is MTTTSAFMLN…KAGLVDDVVP (190 aa). A 3-hydroxyacyl-CoA dehydrogenase region spans residues 306 to 715; that stretch reads GPLNSVGILG…WTNGETDQGN (410 aa).

It in the N-terminal section; belongs to the enoyl-CoA hydratase/isomerase family. The protein in the central section; belongs to the 3-hydroxyacyl-CoA dehydrogenase family. As to quaternary structure, heterotetramer of two alpha chains (FadJ) and two beta chains (FadI).

The protein localises to the cytoplasm. It carries out the reaction a (3S)-3-hydroxyacyl-CoA = a (2E)-enoyl-CoA + H2O. The enzyme catalyses a 4-saturated-(3S)-3-hydroxyacyl-CoA = a (3E)-enoyl-CoA + H2O. It catalyses the reaction a (3S)-3-hydroxyacyl-CoA + NAD(+) = a 3-oxoacyl-CoA + NADH + H(+). The catalysed reaction is (3S)-3-hydroxybutanoyl-CoA = (3R)-3-hydroxybutanoyl-CoA. The protein operates within lipid metabolism; fatty acid beta-oxidation. In terms of biological role, catalyzes the formation of a hydroxyacyl-CoA by addition of water on enoyl-CoA. Also exhibits 3-hydroxyacyl-CoA epimerase and 3-hydroxyacyl-CoA dehydrogenase activities. The sequence is that of Fatty acid oxidation complex subunit alpha from Salmonella newport (strain SL254).